The chain runs to 548 residues: Phosphoglucomutase (548 aa).

The Phosphoserine intermediate role is filled by Ser135. Mg(2+) is bound by residues Ser135, Asp288, Asp290, and Asp292.

It belongs to the phosphohexose mutase family. Mg(2+) serves as cofactor.

It carries out the reaction alpha-D-glucose 1-phosphate = alpha-D-glucose 6-phosphate. It functions in the pathway glycolipid metabolism; diglucosyl-diacylglycerol biosynthesis. Functionally, catalyzes the interconversion between glucose-6-phosphate and alpha-glucose-1-phosphate. This is the first step in the biosynthesis of diglucosyl-diacylglycerol (Glc2-DAG), i.e. a glycolipid found in the membrane, which is also used as a membrane anchor for lipoteichoic acid (LTA). This is Phosphoglucomutase (pgcA) from Staphylococcus haemolyticus (strain JCSC1435).